The chain runs to 218 residues: Zinc finger CCHC-type and RNA-binding motif-containing protein 1 (218 aa).

Residues 10–88 (STVYVSNLPF…RAIKASIAKD (79 aa)) enclose the RRM domain. The CCHC-type zinc-finger motif lies at 105–122 (SRCYECGDTGHLSYACPK). The interval 119–218 (ACPKNMLGER…YFSDEDELSD (100 aa)) is disordered. The stretch at 132–188 (QKKEKKKRKRLVEEEEEEVVEEEESEDEGEDPALDSLSQAIAFQQARIDEEKNKYRH) forms a coiled coil. Residues 144–164 (EEEEEEVVEEEESEDEGEDPA) are compositionally biased toward acidic residues. The segment covering 178-201 (RIDEEKNKYRHDPAEASTSEDSRR) has biased composition (basic and acidic residues).

In terms of assembly, component of the U11/U12 snRNPs that are part of the U12-type spliceosome.

It is found in the nucleus. This chain is Zinc finger CCHC-type and RNA-binding motif-containing protein 1 (zcrb1), found in Xenopus laevis (African clawed frog).